The primary structure comprises 382 residues: Mannitol-1-phosphate 5-dehydrogenase (382 aa).

3–14 (ALHFGAGNIGRG) contributes to the NAD(+) binding site. Position 269 is an N6-acetyllysine (K269).

It belongs to the mannitol dehydrogenase family.

It catalyses the reaction D-mannitol 1-phosphate + NAD(+) = beta-D-fructose 6-phosphate + NADH + H(+). In Escherichia coli (strain ATCC 8739 / DSM 1576 / NBRC 3972 / NCIMB 8545 / WDCM 00012 / Crooks), this protein is Mannitol-1-phosphate 5-dehydrogenase.